A 474-amino-acid polypeptide reads, in one-letter code: UDP-glycosyltransferase 71E1 (474 aa).

UDP-alpha-D-glucose-binding positions include serine 275, 341–342, 359–367, and 381–384; these read WA, HCGWNSTLE, and YAEQ.

The protein belongs to the UDP-glycosyltransferase family.

Functionally, may glycosylate diterpenes or flavonols in leaves. The sequence is that of UDP-glycosyltransferase 71E1 from Stevia rebaudiana (Stevia).